A 161-amino-acid chain; its full sequence is UPF0303 protein Spro_1996 (161 aa).

The protein belongs to the UPF0303 family.

In Serratia proteamaculans (strain 568), this protein is UPF0303 protein Spro_1996.